Consider the following 303-residue polypeptide: Inosose dehydratase (303 aa).

This sequence belongs to the IolE/MocC family. Requires glutathione as cofactor. It depends on Co(2+) as a cofactor. Mn(2+) serves as cofactor.

The catalysed reaction is scyllo-inosose = 3D-3,5/4-trihydroxycyclohexane-1,2-dione + H2O. It functions in the pathway polyol metabolism; myo-inositol degradation into acetyl-CoA; acetyl-CoA from myo-inositol: step 2/7. Catalyzes the dehydration of inosose (2-keto-myo-inositol, 2KMI or 2,4,6/3,5-pentahydroxycyclohexanone) to 3D-(3,5/4)-trihydroxycyclohexane-1,2-dione (D-2,3-diketo-4-deoxy-epi-inositol). The chain is Inosose dehydratase from Halalkalibacterium halodurans (strain ATCC BAA-125 / DSM 18197 / FERM 7344 / JCM 9153 / C-125) (Bacillus halodurans).